A 65-amino-acid chain; its full sequence is Large ribosomal subunit protein uL29 (65 aa).

Belongs to the universal ribosomal protein uL29 family.

In Thioalkalivibrio sulfidiphilus (strain HL-EbGR7), this protein is Large ribosomal subunit protein uL29.